The chain runs to 1855 residues: Collagen alpha-1(XXVII) chain (1855 aa).

The signal sequence occupies residues 1–48 (MGLARATAGLGPCCPPAPALLGAGLRWGGFLFAWILVSFSCHLASTQG). A propeptide spans 49–618 (APEDVDVLQR…PEPTPFLMLM (570 aa)) (N-terminal propeptide). Positions 81–246 (PSGFIFTQRA…NYCAHLRERC (166 aa)) constitute a Laminin G-like domain. N-linked (GlcNAc...) asparagine glycans are attached at residues asparagine 281 and asparagine 349. Disordered stretches follow at residues 317–428 (DVSK…SATV), 511–580 (PPLG…SQLS), 617–787 (LMGP…GFPG), and 838–1617 (GGVG…HPVQ). 2 stretches are compositionally biased toward polar residues: residues 382 to 427 (LSVT…SSAT) and 520 to 532 (MMPS…STPA). Residues 563-573 (TARDASPRDLT) are compositionally biased toward basic and acidic residues. Collagen-like domains are found at residues 619 to 673 (GPPG…GDPG), 682 to 741 (GAKG…PGPV), 751 to 810 (GYIG…PGPP), 826 to 885 (GYPG…PGPM), 886 to 945 (GKAG…EGPM), 946 to 1005 (GPPG…VGEK), 1006 to 1047 (GDRG…PGSR), 1048 to 1105 (GLPG…GAKG), 1108 to 1155 (GIPG…PGLP), 1156 to 1215 (GDSG…KGQE), 1216 to 1275 (GLKG…PGTP), 1276 to 1330 (GPKG…GEDG), and 1334 to 1393 (GAPG…KGSK). Residues 619–1612 (GPPGSKGDCG…RGRPGPPGPP (994 aa)) form a triple-helical region region. A compositionally biased stretch (pro residues) spans 630–663 (PGPPGLPGLPGSPGPRGPRGPPGPFGNPGLPGPP). Residues 708-728 (PGAAGHPGEQGQPGPEGSPGA) show a composition bias toward low complexity. The segment covering 905 to 918 (FPGDIGPPGDNGPE) has biased composition (low complexity). Residues 1027–1036 (GTPGGVGDPG) show a composition bias toward gly residues. 3 stretches are compositionally biased toward low complexity: residues 1083–1095 (RGRP…QGAA), 1121–1131 (LPGEPGSQGPQ), and 1161–1176 (KGDL…QGLI). Basic and acidic residues-rich tracts occupy residues 1196 to 1221 (LKGD…KGEE), 1320 to 1332 (KGEK…DGKT), and 1344 to 1354 (PVGDRGDRGEP). 2 stretches are compositionally biased toward low complexity: residues 1369-1378 (RGEPGQQGQP) and 1404-1431 (KAGA…RQGP). Collagen-like domains follow at residues 1433–1492 (GMAG…SGLP), 1493–1552 (GQLG…KGIQ), and 1553–1612 (GPRG…PGPP). Over residues 1566–1581 (IIGPPGMLGPSGLPGP) the composition is skewed to low complexity. Positions 1597 to 1614 (RGPPGPRGRPGPPGPPWH) are enriched in pro residues. A propeptide spans 1616–1855 (VQFQQDDLEA…RLEVGPACFL (240 aa)) (C-terminal propeptide). Residues 1655-1855 (GEIFKTLHYL…RLEVGPACFL (201 aa)) enclose the Fibrillar collagen NC1 domain. 3 disulfide bridges follow: cysteine 1685/cysteine 1717, cysteine 1726/cysteine 1853, and cysteine 1762/cysteine 1806. Ca(2+)-binding residues include aspartate 1703, asparagine 1705, cysteine 1708, and aspartate 1711. Asparagine 1764 carries an N-linked (GlcNAc...) asparagine glycan.

This sequence belongs to the fibrillar collagen family.

The protein localises to the secreted. It localises to the extracellular space. Its subcellular location is the extracellular matrix. Its function is as follows. Plays a role during the calcification of cartilage and the transition of cartilage to bone. The sequence is that of Collagen alpha-1(XXVII) chain (Col27a1) from Rattus norvegicus (Rat).